Here is a 227-residue protein sequence, read N- to C-terminus: 2,3-bisphosphoglycerate-dependent phosphoglycerate mutase (227 aa).

Substrate contacts are provided by residues 7 to 14, 20 to 21, R59, 86 to 89, K97, 113 to 114, and 182 to 183; these read RHGFSEWN, TG, ERHY, RR, and GN. The Tele-phosphohistidine intermediate role is filled by H8. The active-site Proton donor/acceptor is E86.

It belongs to the phosphoglycerate mutase family. BPG-dependent PGAM subfamily. As to quaternary structure, homodimer.

It carries out the reaction (2R)-2-phosphoglycerate = (2R)-3-phosphoglycerate. It participates in carbohydrate degradation; glycolysis; pyruvate from D-glyceraldehyde 3-phosphate: step 3/5. Its function is as follows. Catalyzes the interconversion of 2-phosphoglycerate and 3-phosphoglycerate. The sequence is that of 2,3-bisphosphoglycerate-dependent phosphoglycerate mutase from Haemophilus influenzae (strain ATCC 51907 / DSM 11121 / KW20 / Rd).